A 250-amino-acid chain; its full sequence is Triosephosphate isomerase, glycosomal (250 aa).

Substrate is bound by residues Asn-11 and Lys-13. His-95 acts as the Electrophile in catalysis. The active-site Proton acceptor is the Glu-167.

The protein belongs to the triosephosphate isomerase family. Homodimer.

It is found in the glycosome. The enzyme catalyses D-glyceraldehyde 3-phosphate = dihydroxyacetone phosphate. It participates in carbohydrate biosynthesis; gluconeogenesis. It functions in the pathway carbohydrate degradation; glycolysis; D-glyceraldehyde 3-phosphate from glycerone phosphate: step 1/1. This is Triosephosphate isomerase, glycosomal from Trypanosoma brucei brucei.